The primary structure comprises 184 residues: Ribosome maturation factor RimM (184 aa).

In terms of domain architecture, PRC barrel spans 101-180; that stretch reads DGEFFYCDLV…KITTNNAKTL (80 aa).

Belongs to the RimM family. In terms of assembly, binds ribosomal protein uS19.

It is found in the cytoplasm. Its function is as follows. An accessory protein needed during the final step in the assembly of 30S ribosomal subunit, possibly for assembly of the head region. Essential for efficient processing of 16S rRNA. May be needed both before and after RbfA during the maturation of 16S rRNA. It has affinity for free ribosomal 30S subunits but not for 70S ribosomes. The chain is Ribosome maturation factor RimM from Helicobacter pylori (strain Shi470).